Here is a 484-residue protein sequence, read N- to C-terminus: Cobyric acid synthase (484 aa).

A GATase cobBQ-type domain is found at 253–430; that stretch reads SLRVAVVRFP…WHGAFEHDEF (178 aa). The active-site Nucleophile is cysteine 334. Histidine 422 is a catalytic residue.

The protein belongs to the CobB/CobQ family. CobQ subfamily.

The protein operates within cofactor biosynthesis; adenosylcobalamin biosynthesis. In terms of biological role, catalyzes amidations at positions B, D, E, and G on adenosylcobyrinic A,C-diamide. NH(2) groups are provided by glutamine, and one molecule of ATP is hydrogenolyzed for each amidation. This chain is Cobyric acid synthase, found in Cutibacterium acnes (strain DSM 16379 / KPA171202) (Propionibacterium acnes).